The sequence spans 150 residues: Allograft inflammatory factor 1-like (150 aa).

The residue at position 2 (serine 2) is an N-acetylserine. Residue serine 2 is modified to Phosphoserine. The region spanning 47 to 82 is the EF-hand 1 domain; the sequence is EKLAAFKEKYMEFDLNNEGEIDLMSLKRMMEKLGVP. The Ca(2+) site is built by aspartate 60, asparagine 62, glutamate 64, and glutamate 66. One can recognise an EF-hand 2; degenerate domain in the interval 83 to 117; that stretch reads KTHLEMKKMISEVTGGVSDTISYRDFVNMMLGKRS. The tract at residues 129 to 150 is disordered; it reads KANESSPKPAGPPPERDIASLP. Position 134 is a phosphoserine (serine 134).

As to quaternary structure, homodimer (Potential). Monomer.

The protein localises to the cytoplasm. Its subcellular location is the cytoskeleton. It localises to the cell projection. The protein resides in the ruffle membrane. Functionally, actin-binding protein that promotes actin bundling. May neither bind calcium nor depend on calcium for function. This Mus musculus (Mouse) protein is Allograft inflammatory factor 1-like (Aif1l).